The sequence spans 423 residues: Imidazolonepropionase (423 aa).

Residues His78 and His80 each contribute to the Fe(3+) site. His78 and His80 together coordinate Zn(2+). Arg87, Tyr150, and His183 together coordinate 4-imidazolone-5-propanoate. Tyr150 serves as a coordination point for N-formimidoyl-L-glutamate. His247 is a Fe(3+) binding site. A Zn(2+)-binding site is contributed by His247. Glu250 is a 4-imidazolone-5-propanoate binding site. Asp322 contributes to the Fe(3+) binding site. Residue Asp322 coordinates Zn(2+). Positions 324 and 326 each coordinate N-formimidoyl-L-glutamate. Ser327 is a binding site for 4-imidazolone-5-propanoate.

It belongs to the metallo-dependent hydrolases superfamily. HutI family. Zn(2+) serves as cofactor. The cofactor is Fe(3+).

The protein resides in the cytoplasm. The catalysed reaction is 4-imidazolone-5-propanoate + H2O = N-formimidoyl-L-glutamate. The protein operates within amino-acid degradation; L-histidine degradation into L-glutamate; N-formimidoyl-L-glutamate from L-histidine: step 3/3. In terms of biological role, catalyzes the hydrolytic cleavage of the carbon-nitrogen bond in imidazolone-5-propanoate to yield N-formimidoyl-L-glutamate. It is the third step in the universal histidine degradation pathway. The protein is Imidazolonepropionase of Bacillus thuringiensis (strain Al Hakam).